The following is a 226-amino-acid chain: Enolase-phosphatase E1 (226 aa).

The protein belongs to the HAD-like hydrolase superfamily. MasA/MtnC family. As to quaternary structure, monomer. Mg(2+) serves as cofactor.

It carries out the reaction 5-methylsulfanyl-2,3-dioxopentyl phosphate + H2O = 1,2-dihydroxy-5-(methylsulfanyl)pent-1-en-3-one + phosphate. The protein operates within amino-acid biosynthesis; L-methionine biosynthesis via salvage pathway; L-methionine from S-methyl-5-thio-alpha-D-ribose 1-phosphate: step 3/6. It participates in amino-acid biosynthesis; L-methionine biosynthesis via salvage pathway; L-methionine from S-methyl-5-thio-alpha-D-ribose 1-phosphate: step 4/6. In terms of biological role, bifunctional enzyme that catalyzes the enolization of 2,3-diketo-5-methylthiopentyl-1-phosphate (DK-MTP-1-P) into the intermediate 2-hydroxy-3-keto-5-methylthiopentenyl-1-phosphate (HK-MTPenyl-1-P), which is then dephosphorylated to form the acireductone 1,2-dihydroxy-3-keto-5-methylthiopentene (DHK-MTPene). This chain is Enolase-phosphatase E1, found in Shewanella sp. (strain W3-18-1).